Reading from the N-terminus, the 292-residue chain is Phosphoribosylaminoimidazole-succinocarboxamide synthase (292 aa).

Belongs to the SAICAR synthetase family.

The enzyme catalyses 5-amino-1-(5-phospho-D-ribosyl)imidazole-4-carboxylate + L-aspartate + ATP = (2S)-2-[5-amino-1-(5-phospho-beta-D-ribosyl)imidazole-4-carboxamido]succinate + ADP + phosphate + 2 H(+). Its pathway is purine metabolism; IMP biosynthesis via de novo pathway; 5-amino-1-(5-phospho-D-ribosyl)imidazole-4-carboxamide from 5-amino-1-(5-phospho-D-ribosyl)imidazole-4-carboxylate: step 1/2. In Elusimicrobium minutum (strain Pei191), this protein is Phosphoribosylaminoimidazole-succinocarboxamide synthase.